A 517-amino-acid polypeptide reads, in one-letter code: Cytochrome P450 monooxygenase sdnE (517 aa).

Residues 4-24 (SSILQTLAVLYVLYLLGLIIY) form a helical membrane-spanning segment. The N-linked (GlcNAc...) asparagine glycan is linked to N111. The helical transmembrane segment at 219–239 (FPVVFIILGLSPRAMLKLVVP) threads the bilayer. C456 contacts heme.

Belongs to the cytochrome P450 family. Heme serves as cofactor.

The protein localises to the membrane. Its pathway is antibiotic biosynthesis. Its function is as follows. Cytochrome P450 monooxygenase; part of the gene cluster that mediates the biosynthesis of sordarin and hypoxysordarin, glycoside antibiotics with a unique tetracyclic diterpene aglycone structure. First, the geranylgeranyl diphosphate synthase sdnC constructs GGDP from farnesyl diphosphate and isopentenyl diphosphate. The diterpene cyclase sdnA then catalyzes the cyclization of GGDP to afford cycloaraneosene. Cycloaraneosene is then hydroxylated four times by the putative cytochrome P450 monooxygenases sdnB, sdnE, sdnF and sdnH to give a hydroxylated cycloaraneosene derivative such as cycloaraneosene-8,9,13,19-tetraol. Although the order of the hydroxylations is unclear, at least C8, C9 and C13 of the cycloaraneosene skeleton are hydroxylated before the sordaricin formation. Dehydration of the 13-hydroxy group of the hydroxylated cycloaraneosene derivative might be catalyzed by an unassigned hypothetical protein such as sdnG and sdnP to construct the cyclopentadiene moiety. The FAD-dependent oxidoreductase sdnN is proposed to catalyze the oxidation at C9 of the hydroxylated cycloaraneosene derivative and also catalyze the Baeyer-Villiger oxidation to give the lactone intermediate. The presumed lactone intermediate would be hydrolyzed to give an acrolein moiety and a carboxylate moiety. Then, [4+2]cycloaddition would occur between the acrolein moiety and the cyclopentadiene moiety to give sordaricin. SdnN might also be involved in the [4+2]cycloaddition after the hypothesized oxidation to accommodate the oxidized product and prompt the [4+2]cycloaddition. GDP-6-deoxy-D-altrose may be biosynthesized from GDP-D-mannose by the putative GDP-mannose-4,6-dehydratase sdnI and the short-chain dehydrogenase sdnK. The glycosyltransferase sdnJ catalyzes the attachment of 6-deoxy-D-altrose onto the 19-hydroxy group of sordaricin to give 4'-O-demethylsordarin. The methyltransferase sdnD would complete the biosynthesis of sordarin. Sordarin can be further modified into hypoxysordarin. The unique acyl chain at the 3'-hydroxy group of hypoxysordarin would be constructed by an iterative type I PKS sdnO and the trans-acting polyketide methyltransferase sdnL. SdnL would be responsible for the introduction of an alpha-methyl group of the polyketide chain. Alternatively, the beta-lactamase-like protein sdnR might be responsible for the cleavage and transfer of the polyketide chain from the PKS sdnO to sordarin. Two putative cytochrome P450 monooxygenases, sdnQ and sdnT, might catalyze the epoxidations of the polyketide chain to complete the biosynthesis of hypoxysordarin. Transcriptional regulators sdnM and sdnS are presumably encoded for the transcriptional regulation of the expression of the sdn gene cluster. The chain is Cytochrome P450 monooxygenase sdnE from Sordaria araneosa (Pleurage araneosa).